The sequence spans 146 residues: 3-hydroxyacyl-[acyl-carrier-protein] dehydratase FabZ (146 aa).

His-49 is an active-site residue.

The protein belongs to the thioester dehydratase family. FabZ subfamily.

It is found in the cytoplasm. The enzyme catalyses a (3R)-hydroxyacyl-[ACP] = a (2E)-enoyl-[ACP] + H2O. In terms of biological role, involved in unsaturated fatty acids biosynthesis. Catalyzes the dehydration of short chain beta-hydroxyacyl-ACPs and long chain saturated and unsaturated beta-hydroxyacyl-ACPs. The sequence is that of 3-hydroxyacyl-[acyl-carrier-protein] dehydratase FabZ from Pseudomonas fluorescens (strain Pf0-1).